Reading from the N-terminus, the 454-residue chain is Glutamine synthetase (454 aa).

Residues 25-111 (QGIDFLRLQF…LICDVVDREG (87 aa)) form the GS beta-grasp domain. The 337-residue stretch at 118-454 (PRQVLKNVLA…WETDRYLEKF (337 aa)) folds into the GS catalytic domain. Mg(2+) contacts are provided by E141 and E143. ATP is bound at residue E193. 2 residues coordinate Mg(2+): E198 and E205. Residues 249–250 (NG) and G250 each bind L-glutamate. Residue H254 participates in Mg(2+) binding. ATP-binding positions include 256–258 (HIS) and S258. R308, E314, and R326 together coordinate L-glutamate. ATP-binding residues include R326 and R331. E343 is a Mg(2+) binding site. R345 serves as a coordination point for L-glutamate.

This sequence belongs to the glutamine synthetase family. In terms of assembly, oligomer of 12 subunits arranged in the form of two hexagons. In its feedback-inhibited form, interacts with TnrA in order to block its DNA-binding activity. It depends on Mg(2+) as a cofactor.

The protein resides in the cytoplasm. It catalyses the reaction L-glutamate + NH4(+) + ATP = L-glutamine + ADP + phosphate + H(+). With respect to regulation, inhibited by glutamine. Its function is as follows. Glutamine synthetase (GS) is an unusual multitasking protein that functions as an enzyme, a transcription coregulator, and a chaperone in ammonium assimilation and in the regulation of genes involved in nitrogen metabolism. It catalyzes the ATP-dependent biosynthesis of glutamine from glutamate and ammonia. Feedback-inhibited GlnA also interacts with and regulates the activity of the transcriptional regulator TnrA. During nitrogen limitation, TnrA is in its DNA-binding active state and turns on the transcription of genes required for nitrogen assimilation. Under conditions of nitrogen excess, feedback-inhibited GlnA forms a stable complex with TnrA, which inhibits its DNA-binding activity. In contrast, feedback-inhibited GlnA acts as a chaperone to stabilize the DNA-binding activity of GlnR, which represses the transcription of nitrogen assimilation genes. The polypeptide is Glutamine synthetase (Halobacterium salinarum (strain ATCC 700922 / JCM 11081 / NRC-1) (Halobacterium halobium)).